A 518-amino-acid chain; its full sequence is Ell-associated factor Eaf (518 aa).

Composition is skewed to polar residues over residues 119 to 128 (KTRSEMTNKP) and 163 to 182 (ENST…SRRN). Disordered stretches follow at residues 119–216 (KTRS…PAWH) and 241–518 (ALHN…DDDD). S192 is modified (phosphoserine). Polar residues-rich tracts occupy residues 253–265 (ANIS…SSVG) and 274–284 (MGKQRQASSQG). A compositionally biased stretch (low complexity) spans 289–342 (QQQTQRSSPPMQQQQQQQNYGRGGANNNYAQQLHQQQQQQQQQQLQQQQQQMQQ). Residues 343-355 (RASFSHSNHSNSM) are compositionally biased toward polar residues. The span at 368–377 (AAQSMAQAAA) shows a compositional bias: low complexity. Residues 397–412 (ESSDSDSGSDSDDSTE) are compositionally biased toward acidic residues. Low complexity-rich tracts occupy residues 418-428 (HQQQQPPGQLS), 463-476 (QQQQ…QQQQ), and 500-518 (NDLL…DDDD).

Belongs to the EAF family.

It is found in the nucleus. Promotes transcriptional elongation by Su(Tpl)/ELL. Essential for development. This chain is Ell-associated factor Eaf, found in Drosophila mojavensis (Fruit fly).